Here is a 351-residue protein sequence, read N- to C-terminus: Dysbindin (351 aa).

Positions 106–179 form a coiled coil; the sequence is FLADLECLTA…AELDAEHAQK (74 aa). A disordered region spans residues 291-325; that stretch reads RHKLSSLSSTCTDSASQEASEGESPVVQSDEEEVQ. A compositionally biased stretch (low complexity) spans 295–306; that stretch reads SSLSSTCTDSAS.

The protein belongs to the dysbindin family. Component of the biogenesis of lysosome-related organelles complex 1 (BLOC-1).

Its subcellular location is the cytoplasm. The protein localises to the cytoplasmic vesicle membrane. The protein resides in the cytoplasmic vesicle. It localises to the secretory vesicle. It is found in the synaptic vesicle membrane. Its subcellular location is the endosome membrane. The protein localises to the melanosome membrane. The protein resides in the nucleus. It localises to the postsynaptic density. It is found in the endoplasmic reticulum. Functionally, component of the BLOC-1 complex, a complex that is required for normal biogenesis of lysosome-related organelles (LRO), such as platelet dense granules and melanosomes. Plays a role in intracellular vesicle trafficking. Plays a role in synaptic vesicle trafficking and in neurotransmitter release. May be required for normal dopamine homeostasis in the cerebral cortex, hippocampus, and hypothalamus. Plays a role in the regulation of cell surface exposure of DRD2. Contributes to the regulation of dopamine signaling. May play a role in actin cytoskeleton reorganization and neurite outgrowth. In Gallus gallus (Chicken), this protein is Dysbindin (DTNBP1).